Reading from the N-terminus, the 1109-residue chain is Cation channel sperm-associated auxiliary subunit beta (1109 aa).

Residues 1–1055 (MESPLIYVML…QIYVDEVPLP (1055 aa)) lie on the Extracellular side of the membrane. Cysteines 35 and 60 form a disulfide. 3 N-linked (GlcNAc...) asparagine glycosylation sites follow: N66, N90, and N118. A disulfide bridge connects residues C189 and C302. N-linked (GlcNAc...) asparagine glycosylation is present at N321. A disulfide bond links C330 and C343. N672 is a glycosylation site (N-linked (GlcNAc...) asparagine). 4 disulfides stabilise this stretch: C720–C818, C831–C1039, C913–C922, and C924–C939. N-linked (GlcNAc...) asparagine glycosylation is found at N915 and N923. N-linked (GlcNAc...) asparagine glycosylation occurs at N1017. The helical transmembrane segment at 1056–1078 (FPGHALIAVATSVVLGVLIFIAF) threads the bilayer. The Cytoplasmic segment spans residues 1079–1109 (VFQLRNIHPLKALKKSIRGNPGLTSSTTVSS).

Component of the CatSper complex or CatSpermasome composed of the core pore-forming members CATSPER1, CATSPER2, CATSPER3 and CATSPER4 as well as auxiliary members CATSPERB, CATSPERG2, CATSPERD, CATSPERE, CATSPERZ, C2CD6/CATSPERT, SLCO6C1, TMEM249, TMEM262 and EFCAB9. HSPA1 may be an additional auxiliary complex member. The core complex members CATSPER1, CATSPER2, CATSPER3 and CATSPER4 form a heterotetrameric channel. The auxiliary CATSPERB, CATSPERG2, CATSPERD and CATSPERE subunits form a pavilion-like structure over the pore which stabilizes the complex through interactions with CATSPER4, CATSPER3, CATSPER1 and CATSPER2 respectively. SLCO6C1 interacts with CATSPERE and TMEM262/CATSPERH interacts with CATSPERB, further stabilizing the complex. C2CD6/CATSPERT interacts at least with CATSPERD and is required for targeting the CatSper complex in the flagellar membrane. In terms of tissue distribution, testis-specific. Specifically present in the principal piece of sperm tail (at protein level). Specifically expressed in the seminiferous tubules but not in the interstitial cells. Within the tubules, it is expressed in spermatocytes and spermatids, but not in spermatogonia.

It is found in the cell projection. Its subcellular location is the cilium. The protein resides in the flagellum membrane. Its function is as follows. Auxiliary component of the CatSper complex, a complex involved in sperm cell hyperactivation. Sperm cell hyperactivation is needed for sperm motility which is essential late in the preparation of sperm for fertilization. This chain is Cation channel sperm-associated auxiliary subunit beta, found in Mus musculus (Mouse).